Here is a 339-residue protein sequence, read N- to C-terminus: D-glycero-alpha-D-manno-heptose 7-phosphate kinase (339 aa).

17–20 (GGTD) provides a ligand contact to substrate. ATP-binding positions include Ser57 and 110–116 (GSGLGGS). Residues Ser116 and Glu148 each coordinate Mg(2+). The active-site Proton acceptor is the Asp160.

It belongs to the GHMP kinase family.

It carries out the reaction D-glycero-alpha-D-manno-heptose 7-phosphate + ATP = D-glycero-alpha-D-manno-heptose 1,7-bisphosphate + ADP + H(+). The protein operates within nucleotide-sugar biosynthesis; GDP-D-glycero-alpha-D-manno-heptose biosynthesis; GDP-D-glycero-alpha-D-manno-heptose from D-glycero-alpha-D-manno-heptose 7-phosphate: step 1/3. Its pathway is capsule biogenesis; capsule polysaccharide biosynthesis. Functionally, catalyzes the phosphorylation of D-glycero-alpha-D-manno-heptose 7-phosphate at the C-1 position to form D-glycero-alpha-D-manno-heptose 1,7-bisphosphate. The sequence is that of D-glycero-alpha-D-manno-heptose 7-phosphate kinase from Campylobacter jejuni subsp. jejuni serotype O:2 (strain ATCC 700819 / NCTC 11168).